A 382-amino-acid polypeptide reads, in one-letter code: Galactokinase (382 aa).

Position 34-37 (34-37 (EHTD)) interacts with substrate. 124 to 130 (GAGLSSS) contributes to the ATP binding site. Mg(2+)-binding residues include Ser130 and Glu162. Asp174 acts as the Proton acceptor in catalysis. Tyr223 is a substrate binding site.

Belongs to the GHMP kinase family. GalK subfamily.

The protein localises to the cytoplasm. The catalysed reaction is alpha-D-galactose + ATP = alpha-D-galactose 1-phosphate + ADP + H(+). The protein operates within carbohydrate metabolism; galactose metabolism. Functionally, catalyzes the transfer of the gamma-phosphate of ATP to D-galactose to form alpha-D-galactose-1-phosphate (Gal-1-P). This chain is Galactokinase, found in Salmonella arizonae (strain ATCC BAA-731 / CDC346-86 / RSK2980).